We begin with the raw amino-acid sequence, 367 residues long: Developmentally-regulated GTP-binding protein 1 (367 aa).

Ser-2 carries the post-translational modification N-acetylserine. The tract at residues 2-16 (SSTLAKIAEIEAEMA) is required for interaction with STK16. Lys-22 is modified ((3S)-3-hydroxylysine). The OBG-type G domain occupies 65–290 (ARIGFVGFPS…LLEKIWDYLK (226 aa)). Residues 71–78 (GFPSVGKS), 96–100 (FTTLT), 117–120 (DLPG), 248–251 (NKID), and 271–273 (SAH) each bind GTP. Mg(2+) contacts are provided by Ser-78 and Thr-98. Thr-100 is modified (phosphothreonine; by STK16). The TGS domain maps to 290–366 (KLVRIYTKPK…EDEDVIQIVK (77 aa)).

It belongs to the TRAFAC class OBG-HflX-like GTPase superfamily. OBG GTPase family. As to quaternary structure, interacts (via its C-terminal) with TAL1. Interacts with DFRP1/ZC3H15; this interaction prevents DRG1 poly-ubiquitination and degradation by proteasome. DRG1-ZC3H15/DFRP1 complex co-sediments with polysomes. Interacts with STK16. Interacts with JMJD7. In terms of processing, sumoylated by UBE2I in response to MEKK1-mediated stimuli. Post-translationally, hydroxylated (with S stereochemistry) at C-3 of Lys-22 by JMJD7. Phosphorylated at Thr-100 by STK16. In terms of processing, polyubiquitinated; this modification induces proteolytic degradation and is impaired by interaction with ZC3H15.

Its subcellular location is the nucleus. The protein localises to the cytoplasm. The catalysed reaction is GTP + H2O = GDP + phosphate + H(+). The GTPase activity is enhanced by potassium ions as well as by DFRP1 binding. Catalyzes the conversion of GTP to GDP through hydrolysis of the gamma-phosphate bond in GTP. Appears to have an intrinsic GTPase activity that is stimulated by ZC3H15/DFRP1 binding likely by increasing the affinity for the potassium ions. When hydroxylated at C-3 of 'Lys-22' by JMJD7, may bind to RNA and play a role in translation. Binds to microtubules and promotes microtubule polymerization and bundling that are required for mitotic spindle assembly during prophase to anaphase transition. GTPase activity is not necessary for these microtubule-related functions. This Bos taurus (Bovine) protein is Developmentally-regulated GTP-binding protein 1 (DRG1).